Reading from the N-terminus, the 125-residue chain is Small ribosomal subunit protein uS13 (125 aa).

The protein belongs to the universal ribosomal protein uS13 family. Part of the 30S ribosomal subunit. Forms a loose heterodimer with protein S19. Forms two bridges to the 50S subunit in the 70S ribosome.

Its function is as follows. Located at the top of the head of the 30S subunit, it contacts several helices of the 16S rRNA. In the 70S ribosome it contacts the 23S rRNA (bridge B1a) and protein L5 of the 50S subunit (bridge B1b), connecting the 2 subunits; these bridges are implicated in subunit movement. Contacts the tRNAs in the A and P-sites. In Rickettsia akari (strain Hartford), this protein is Small ribosomal subunit protein uS13.